A 4841-amino-acid chain; its full sequence is Nonribosomal peptide synthetase 2 (4841 aa).

The segment at 26–429 (VKPPNQNVAL…GRLSDGQVKL (404 aa)) is adenylation 1. The region spanning 531–604 (EPVDEFESSL…DIIFAARRQI (74 aa)) is the Carrier 1 domain. At Ser565 the chain carries O-(pantetheine 4'-phosphoryl)serine. The segment at 640-1042 (EEIIPCTPLQ…ILERPTQEIK (403 aa)) is condensation 1. The interval 1072–1463 (FEDVVRKHPE…GRIDDQVKLR (392 aa)) is adenylation 2. Residues 1587–1665 (EGDWSRMDLV…QLAKHLEGKP (79 aa)) enclose the Carrier 2 domain. The residue at position 1625 (Ser1625) is an O-(pantetheine 4'-phosphoryl)serine. The segment at 1702 to 2043 (ILPCTPLQEA…QTVWELEADS (342 aa)) is condensation 2. The Carrier 3 domain occupies 2139–2212 (SEVELDVRQV…KIAAKLLENR (74 aa)). Ser2173 is subject to O-(pantetheine 4'-phosphoryl)serine. The tract at residues 2248–2663 (AVLPCTPLQS…NHLATEDEAF (416 aa)) is condensation 3. Residues 2695 to 3090 (AAVHPNKLAL…GRADDQVKLR (396 aa)) are adenylation 3. The region spanning 3219–3293 (QDILVLLYDA…DLANCLAKAA (75 aa)) is the Carrier 4 domain. Residue Ser3253 is modified to O-(pantetheine 4'-phosphoryl)serine. A condensation 4 region spans residues 3333–3735 (IAPCSPLQEG…DLAAESPQSE (403 aa)). Positions 3759-3838 (QNSFEWTSEA…KMITELASIT (80 aa)) constitute a Carrier 5 domain. O-(pantetheine 4'-phosphoryl)serine is present on Ser3799. The segment at 3873 to 4242 (SVLPPTHLQE…VEAEAVSDSL (370 aa)) is condensation 5. The Carrier 6 domain occupies 4318–4394 (IEWNQNEIGI…EMAQKADTKL (77 aa)). Ser4355 is modified (O-(pantetheine 4'-phosphoryl)serine). The segment at 4430 to 4726 (EVLPALPMQV…DIHLITSESR (297 aa)) is condensation 6.

Belongs to the NRP synthetase family.

It participates in siderophore biosynthesis. Its function is as follows. Nonribosomal peptide synthetase; part of the gene cluster that mediates the biosynthesis of hydroxamate-containing siderophores that play a critical role in virulence. Gibberella zeae produces extracellular coprogen-type siderophores as well as the intracellular siderophore ferricrocin. The role of extracellular siderophores is to supply iron to the fungus during plant infection, and the intracellular ferricrocin is required for intracellular iron distribution and storage with a crucial role in ascus and ascospore development. SID1 catalyzes the conversion of L-ornithine to N(5)-hydroxyornithine, the first step in the biosynthesis of all hydroxamate-containing siderophores. The assembly of extracellular coprogen-type siderophores is performed by the nonribosomal peptide synthetase (NRPS) NPS6 whereas the intracellular siderophore ferricrocin is assembled by NPS2. The protein is Nonribosomal peptide synthetase 2 of Gibberella zeae (strain ATCC MYA-4620 / CBS 123657 / FGSC 9075 / NRRL 31084 / PH-1) (Wheat head blight fungus).